A 926-amino-acid chain; its full sequence is G-protein coupled receptor family C group 6 member A (926 aa).

Residues 1-18 (MAFLIILITCFVIILATS) form the signal peptide. Residues 19-594 (QPCQTPDDFV…EYLNWNDSLA (576 aa)) are Extracellular-facing. N121, N259, N332, N378, N452, N555, N567, and N590 each carry an N-linked (GlcNAc...) asparagine glycan. Residues 595 to 615 (ILLLILSLLGIIFVLVVGIIF) form a helical membrane-spanning segment. The Cytoplasmic segment spans residues 616 to 631 (TRNLNTPVVKSSGGLR). The chain crosses the membrane as a helical span at residues 632-652 (VCYVILLCHFLNFASTSFFIG). The Extracellular segment spans residues 653–669 (EPQDFTCKTRQTMFGVS). A helical membrane pass occupies residues 670-690 (FTLCISCILTKSLKILLAFSF). Topologically, residues 691 to 704 (DPKLQKFLKCLYRP) are cytoplasmic. A helical membrane pass occupies residues 705–725 (ILIIFTCTGIQVVICTLWLIF). The Extracellular portion of the chain corresponds to 726–748 (AAPTVEVNVSLPRVIILECEEGS). N733 is a glycosylation site (N-linked (GlcNAc...) asparagine). The helical transmembrane segment at 749-769 (ILAFGTMLGYIAILAFICFIF) threads the bilayer. The Cytoplasmic segment spans residues 770–782 (AFKGKYENYNEAK). A helical transmembrane segment spans residues 783–803 (FITFGMLIYFIAWITFIPIYA). Topologically, residues 804–810 (TTFGKYV) are extracellular. The helical transmembrane segment at 811-831 (PAVEIIVILISNYGILYCTFI) threads the bilayer. Residues 832–926 (PKCYVIICKQ…TLPRKRMSSI (95 aa)) lie on the Cytoplasmic side of the membrane.

Belongs to the G-protein coupled receptor 3 family. In terms of assembly, homodimer; disulfide-linked. As to expression, isoform 1 is expressed at high level in brain, skeletal muscle, testis, bone, calvaria, osteoblasts and leukocytes. Expressed at intermediate level in liver, heart, kidney and spleen. Expressed at low level in lung, pancreas, placenta and ovary. Not detected in thymus, prostate, small intestine, tongue and colon. Isoform 1 and isoform 2 are expressed in kidney at the same level. Isoform 2 is expressed at lower level than isoform 1 in the other tissues.

The protein localises to the cell membrane. Functionally, receptor activated by multiple ligands, including osteocalcin (BGLAP), basic amino acids, and various cations. Activated by amino acids with a preference for basic amino acids such as L-Lys, L-Arg and L-ornithine but also by small and polar amino acids. The L-alpha amino acids respond is augmented by divalent cations Ca(2+) and Mg(2+). Seems to act through a G(q)/G(11) and G(i)-coupled pathway. Regulates testosterone production by acting as a ligand for uncarboxylated osteocalcin hormone: osteocalcin-binding at the surface of Leydig cells initiates a signaling response that promotes the expression of enzymes required for testosterone synthesis in a CREB-dependent manner. Mediates the non-genomic effects of androgens in multiple tissue. May coordinate nutritional and hormonal anabolic signals through the sensing of extracellular amino acids, osteocalcin, divalent ions and its responsiveness to anabolic steroids. The polypeptide is G-protein coupled receptor family C group 6 member A (GPRC6A) (Homo sapiens (Human)).